The chain runs to 183 residues: Beta-defensin 129 (183 aa).

The N-terminal stretch at 1-19 is a signal peptide; it reads MKLLFPIFASLMLQYQVNT. Intrachain disulfides connect cysteine 27-cysteine 53, cysteine 34-cysteine 48, and cysteine 38-cysteine 54. Residues 141-183 form a disordered region; the sequence is TATSTKSNTKESRDSATASSPPAPPPPNILPTPSLELEEAEEQ. Pro residues predominate over residues 161 to 170; it reads PPAPPPPNIL.

It belongs to the beta-defensin family.

It is found in the secreted. Functionally, has antibacterial activity. This chain is Beta-defensin 129 (DEFB129), found in Gorilla gorilla gorilla (Western lowland gorilla).